We begin with the raw amino-acid sequence, 422 residues long: Proline--tRNA ligase (422 aa).

It belongs to the class-II aminoacyl-tRNA synthetase family. ProS type 2 subfamily. In terms of assembly, homodimer.

It localises to the cytoplasm. The enzyme catalyses tRNA(Pro) + L-proline + ATP = L-prolyl-tRNA(Pro) + AMP + diphosphate. In terms of biological role, catalyzes the attachment of proline to tRNA(Pro) in a two-step reaction: proline is first activated by ATP to form Pro-AMP and then transferred to the acceptor end of tRNA(Pro). The protein is Proline--tRNA ligase of Wolbachia pipientis wMel.